A 524-amino-acid chain; its full sequence is Putative cysteine ligase BshC (524 aa).

Residues 437–457 (AQALDRSARKINYQIEKMERK) are a coiled coil.

It belongs to the BshC family.

This Solibacter usitatus (strain Ellin6076) protein is Putative cysteine ligase BshC.